Reading from the N-terminus, the 221-residue chain is Thiamine-phosphate synthase (221 aa).

4-amino-2-methyl-5-(diphosphooxymethyl)pyrimidine is bound by residues 44–48 (QLRLK) and Asn80. Mg(2+)-binding residues include Asp81 and Asp100. Thr119 contacts 4-amino-2-methyl-5-(diphosphooxymethyl)pyrimidine. 146-148 (TTT) provides a ligand contact to 2-[(2R,5Z)-2-carboxy-4-methylthiazol-5(2H)-ylidene]ethyl phosphate. Lys149 provides a ligand contact to 4-amino-2-methyl-5-(diphosphooxymethyl)pyrimidine. Residue Gly176 participates in 2-[(2R,5Z)-2-carboxy-4-methylthiazol-5(2H)-ylidene]ethyl phosphate binding.

This sequence belongs to the thiamine-phosphate synthase family. Requires Mg(2+) as cofactor.

The catalysed reaction is 2-[(2R,5Z)-2-carboxy-4-methylthiazol-5(2H)-ylidene]ethyl phosphate + 4-amino-2-methyl-5-(diphosphooxymethyl)pyrimidine + 2 H(+) = thiamine phosphate + CO2 + diphosphate. It catalyses the reaction 2-(2-carboxy-4-methylthiazol-5-yl)ethyl phosphate + 4-amino-2-methyl-5-(diphosphooxymethyl)pyrimidine + 2 H(+) = thiamine phosphate + CO2 + diphosphate. It carries out the reaction 4-methyl-5-(2-phosphooxyethyl)-thiazole + 4-amino-2-methyl-5-(diphosphooxymethyl)pyrimidine + H(+) = thiamine phosphate + diphosphate. The protein operates within cofactor biosynthesis; thiamine diphosphate biosynthesis; thiamine phosphate from 4-amino-2-methyl-5-diphosphomethylpyrimidine and 4-methyl-5-(2-phosphoethyl)-thiazole: step 1/1. Functionally, condenses 4-methyl-5-(beta-hydroxyethyl)thiazole monophosphate (THZ-P) and 2-methyl-4-amino-5-hydroxymethyl pyrimidine pyrophosphate (HMP-PP) to form thiamine monophosphate (TMP). This chain is Thiamine-phosphate synthase, found in Hyphomonas neptunium (strain ATCC 15444).